A 199-amino-acid polypeptide reads, in one-letter code: Superoxide dismutase [Mn/Fe] (199 aa).

Positions 27, 81, 161, and 165 each coordinate Fe(3+). Mn(2+) is bound by residues H27, H81, D161, and H165.

It belongs to the iron/manganese superoxide dismutase family. As to quaternary structure, homodimer. Requires Mn(2+) as cofactor. Fe(3+) is required as a cofactor.

The enzyme catalyses 2 superoxide + 2 H(+) = H2O2 + O2. In terms of biological role, destroys superoxide anion radicals which are normally produced within the cells and which are toxic to biological systems. Catalyzes the dismutation of superoxide anion radicals into O2 and H2O2 by successive reduction and oxidation of the transition metal ion at the active site. This is Superoxide dismutase [Mn/Fe] (sodA) from Staphylococcus epidermidis (strain ATCC 35984 / DSM 28319 / BCRC 17069 / CCUG 31568 / BM 3577 / RP62A).